Reading from the N-terminus, the 269-residue chain is MSRFDTLFANLKAKNEGAFVPFVTLCDPDFDCSFEIIETLIANGADALELGFPFSDPLLDGPVIQAANKRALDGGYSTDACFEMIAKIRSKYPEIPIGLLLCANLVFVPTQDVFFKRCAETGVDAVLIADVPVLAAEEFTQAAKKHGIQSVFICPPNADQATIERIARLTEGYTYLVSRAGVTSAENQAHAKNLDNLIESLKRSNSAPILQGFGIAKPEQVKEALVLGCDGAISGSAIVKIIERNLDSQTQLLSELAKFVSVMKAATKS.

Residues Glu-49 and Asp-60 each act as proton acceptor in the active site.

This sequence belongs to the TrpA family. As to quaternary structure, tetramer of two alpha and two beta chains.

It catalyses the reaction (1S,2R)-1-C-(indol-3-yl)glycerol 3-phosphate + L-serine = D-glyceraldehyde 3-phosphate + L-tryptophan + H2O. Its pathway is amino-acid biosynthesis; L-tryptophan biosynthesis; L-tryptophan from chorismate: step 5/5. Its function is as follows. The alpha subunit is responsible for the aldol cleavage of indoleglycerol phosphate to indole and glyceraldehyde 3-phosphate. The protein is Tryptophan synthase alpha chain of Actinobacillus pleuropneumoniae serotype 5b (strain L20).